The sequence spans 1456 residues: Macrophage mannose receptor 1 (1456 aa).

A signal peptide spans Met-1–Leu-18. The Extracellular portion of the chain corresponds to Leu-19 to Ala-1389. The Ricin B-type lectin domain occupies Thr-22 to Tyr-142. Cystine bridges form between Cys-35–Cys-49 and Cys-74–Cys-91. The N-linked (GlcNAc...) asparagine glycan is linked to Asn-104. The Fibronectin type-II domain maps to Ala-163 to Leu-211. Intrachain disulfides connect Cys-168–Cys-194, Cys-182–Cys-209, Cys-247–Cys-340, and Cys-316–Cys-332. The region spanning Leu-225–Lys-341 is the C-type lectin 1 domain. N-linked (GlcNAc...) asparagine glycosylation occurs at Asn-344. 4 C-type lectin domains span residues Tyr-369–Lys-487, His-511–Lys-626, Arg-655–Gln-778, and Tyr-807–Gln-923. Disulfide bonds link Cys-391–Cys-486 and Cys-463–Cys-478. N-linked (GlcNAc...) asparagine glycosylation occurs at Asn-529. Intrachain disulfides connect Cys-532/Cys-625, Cys-600/Cys-617, Cys-646/Cys-659, Cys-680/Cys-777, Cys-753/Cys-769, Cys-828/Cys-922, and Cys-899/Cys-914. Asn-926 and Asn-930 each carry an N-linked (GlcNAc...) asparagine glycan. 3 C-type lectin domains span residues Tyr-952–Gln-1080, Tyr-1102–Lys-1213, and Phe-1241–Lys-1356. Disulfide bonds link Cys-977–Cys-1079, Cys-1052–Cys-1071, Cys-1123–Cys-1212, Cys-1190–Cys-1204, Cys-1263–Cys-1355, and Cys-1332–Cys-1347. Residue Asn-1160 is glycosylated (N-linked (GlcNAc...) asparagine). Asn-1205 carries an N-linked (GlcNAc...) asparagine glycan. Residues Gly-1390–Phe-1410 traverse the membrane as a helical segment. The Cytoplasmic segment spans residues Tyr-1411–Ile-1456.

As to quaternary structure, (Microbial infection) Interacts with Dengue virus. (Microbial infection) May act as a receptor for hepatitis B virus, enabling uptake of the virus in hepatic dendritic cells.

The protein localises to the endosome membrane. It is found in the cell membrane. Mediates the endocytosis of glycoproteins by macrophages. Binds both sulfated and non-sulfated polysaccharide chains. Its function is as follows. (Microbial infection) Acts as a phagocytic receptor for bacteria, fungi and other pathogens. Functionally, (Microbial infection) Acts as a receptor for Dengue virus envelope protein E. In terms of biological role, (Microbial infection) Interacts with Hepatitis B virus envelope protein. The polypeptide is Macrophage mannose receptor 1 (MRC1) (Homo sapiens (Human)).